Consider the following 399-residue polypeptide: Argininosuccinate synthase (399 aa).

Residue 9–17 (AYSGGLDTS) participates in ATP binding. Tyr-85 serves as a coordination point for L-citrulline. Gly-115 contributes to the ATP binding site. Residues Thr-117, Asn-121, and Asp-122 each contribute to the L-aspartate site. Residue Asn-121 participates in L-citrulline binding. 4 residues coordinate L-citrulline: Arg-125, Ser-173, Glu-258, and Tyr-270.

This sequence belongs to the argininosuccinate synthase family. Type 1 subfamily. In terms of assembly, homotetramer.

It is found in the cytoplasm. The catalysed reaction is L-citrulline + L-aspartate + ATP = 2-(N(omega)-L-arginino)succinate + AMP + diphosphate + H(+). It functions in the pathway amino-acid biosynthesis; L-arginine biosynthesis; L-arginine from L-ornithine and carbamoyl phosphate: step 2/3. The sequence is that of Argininosuccinate synthase from Streptococcus thermophilus (strain CNRZ 1066).